The chain runs to 474 residues: Glycogen synthase (474 aa).

Position 15 (lysine 15) interacts with ADP-alpha-D-glucose.

This sequence belongs to the glycosyltransferase 1 family. Bacterial/plant glycogen synthase subfamily.

It carries out the reaction [(1-&gt;4)-alpha-D-glucosyl](n) + ADP-alpha-D-glucose = [(1-&gt;4)-alpha-D-glucosyl](n+1) + ADP + H(+). It participates in glycan biosynthesis; glycogen biosynthesis. Synthesizes alpha-1,4-glucan chains using ADP-glucose. The polypeptide is Glycogen synthase (Finegoldia magna (strain ATCC 29328 / DSM 20472 / WAL 2508) (Peptostreptococcus magnus)).